The primary structure comprises 752 residues: Myotubularin-related protein 10 (752 aa).

The Myotubularin phosphatase domain occupies 206–636; the sequence is FDCSSDWDRE…SHLSVWKLYF (431 aa). The stretch at 652–683 forms a coiled coil; sequence TAFHKLSVLTDEIEMLQNQLRQYKGAAGTANT.

It belongs to the protein-tyrosine phosphatase family. Non-receptor class myotubularin subfamily.

This Danio rerio (Zebrafish) protein is Myotubularin-related protein 10 (mtmr10).